The sequence spans 487 residues: MERLIKNSIAYSRFRGDWECKSQFERKQESQEGHLSQMIFTPEDMPTFNTQHQRIHTDEKLLECKECGKDFSFVSVLIRHQRIHTGEKPYECKECGKAFGSGANLAYHQRIHTGEKPYECNECGKAFGSGSNLTHHQRIHTGEKPYECKECGKAFSFGSGLIRHQIIHSGEKPYECKVCGKSFSFESALTRHHRIHTGEKPYECKDCGKAFGSGSNLTQHRRVHTGEKPYECKGCGMAFSSGSALTRHQRIHTGEKPYICNECGKAFSFGSALTRHQRIHTGEKPYVCKECGKAFNSGSDLTQHQRIHTGEKPYECKECEKAFRSGSKLIQHQRMHTGEKPYECKECGKAFSSGSDLTQHQRIHTGEKPYECKECGKAFASGSKLIQHQLIHTGEKPYECRECRKSFSSGSALNRHQRIHTGQKPYECKECEKTFGTGSTLTQHQRMHTAEKLYECKACGKALGRGSEIQQHKKNHAGEKLCELETP.

15 consecutive C2H2-type zinc fingers follow at residues 62–84, 90–112, 118–140, 146–168, 174–196, 202–224, 230–252, 258–280, 286–308, 314–336, 342–364, 370–392, 398–420, 426–448, and 454–476; these read LECK…QRIH, YECK…QRIH, YECN…QRIH, YECK…QIIH, YECK…HRIH, YECK…RRVH, YICN…QRIH, YVCK…QRIH, YECK…QRMH, YECK…QLIH, YECR…QRIH, and YECK…KKNH.

The protein belongs to the krueppel C2H2-type zinc-finger protein family.

The protein localises to the nucleus. May be involved in transcriptional regulation. The protein is Zinc finger protein 345 (ZNF345) of Bos taurus (Bovine).